The following is a 387-amino-acid chain: Lipid-A-disaccharide synthase (387 aa).

It belongs to the LpxB family.

The enzyme catalyses 2-N,3-O-bis[(3R)-3-hydroxytetradecanoyl]-alpha-D-glucosaminyl 1-phosphate + UDP-2-N,3-O-bis[(3R)-3-hydroxytetradecanoyl]-alpha-D-glucosamine = lipid A disaccharide (E. coli) + UDP + H(+). It carries out the reaction a lipid X + a UDP-2-N,3-O-bis[(3R)-3-hydroxyacyl]-alpha-D-glucosamine = a lipid A disaccharide + UDP + H(+). It participates in glycolipid biosynthesis; lipid IV(A) biosynthesis; lipid IV(A) from (3R)-3-hydroxytetradecanoyl-[acyl-carrier-protein] and UDP-N-acetyl-alpha-D-glucosamine: step 5/6. Its function is as follows. Condensation of UDP-2,3-diacylglucosamine and 2,3-diacylglucosamine-1-phosphate to form lipid A disaccharide, a precursor of lipid A, a phosphorylated glycolipid that anchors the lipopolysaccharide to the outer membrane of the cell. This Blochmanniella pennsylvanica (strain BPEN) protein is Lipid-A-disaccharide synthase.